The sequence spans 300 residues: Ribonuclease HIII (300 aa).

One can recognise an RNase H type-2 domain in the interval 83–300 (IPIIGSDEVG…THKAQALLTK (218 aa)). A divalent metal cation contacts are provided by aspartate 89, glutamate 90, and aspartate 194.

The protein belongs to the RNase HII family. RnhC subfamily. The cofactor is Mn(2+). Mg(2+) serves as cofactor.

It is found in the cytoplasm. The enzyme catalyses Endonucleolytic cleavage to 5'-phosphomonoester.. Endonuclease that specifically degrades the RNA of RNA-DNA hybrids. This is Ribonuclease HIII from Streptococcus pyogenes serotype M1.